A 277-amino-acid polypeptide reads, in one-letter code: Large ribosomal subunit protein uL2 (277 aa).

2 disordered regions span residues 32 to 58 (KSLT…RGGG) and 225 to 277 (VAMN…RRNK). The span at 258 to 277 (YKTRKKKRYSDKFIIKRRNK) shows a compositional bias: basic residues.

This sequence belongs to the universal ribosomal protein uL2 family. As to quaternary structure, part of the 50S ribosomal subunit. Forms a bridge to the 30S subunit in the 70S ribosome.

One of the primary rRNA binding proteins. Required for association of the 30S and 50S subunits to form the 70S ribosome, for tRNA binding and peptide bond formation. It has been suggested to have peptidyltransferase activity; this is somewhat controversial. Makes several contacts with the 16S rRNA in the 70S ribosome. The chain is Large ribosomal subunit protein uL2 from Borreliella burgdorferi (strain ATCC 35210 / DSM 4680 / CIP 102532 / B31) (Borrelia burgdorferi).